A 226-amino-acid polypeptide reads, in one-letter code: 6-deoxy-6-sulfo-D-fructose transaldolase (226 aa).

The active-site Schiff-base intermediate with substrate is lysine 89.

Belongs to the transaldolase family.

It carries out the reaction 6-deoxy-6-sulfo-D-fructose + D-glyceraldehyde 3-phosphate = D-fructose 6-phosphate + (2S)-3-sulfolactaldehyde. It catalyses the reaction 6-deoxy-6-sulfo-D-fructose + D-erythrose 4-phosphate = (2S)-3-sulfolactaldehyde + D-sedoheptulose 7-phosphate. Its function is as follows. Part of the sulfo-TAL (or sulfo-SFT) pathway, a D-sulfoquinovose degradation pathway that produces sulfolactate (SL). Catalyzes the conversion of 6-deoxy-6-sulfo-D-fructose (SF) and glyceraldehyde 3-phosphate (GAP) into fructose-6-phosphate (F6P) and 3-sulfolactaldehyde (SLA). Can also catalyze the SF-cleavage with erythrose 4-phosphate (E4P) as acceptor, forming 3-sulfolactaldehyde (SLA) and sedoheptulose 7-phosphate (S7P). The protein is 6-deoxy-6-sulfo-D-fructose transaldolase of Priestia aryabhattai (Bacillus aryabhattai).